Reading from the N-terminus, the 492-residue chain is Aspartyl/glutamyl-tRNA(Asn/Gln) amidotransferase subunit B (492 aa).

This sequence belongs to the GatB/GatE family. GatB subfamily. Heterotrimer of A, B and C subunits.

The catalysed reaction is L-glutamyl-tRNA(Gln) + L-glutamine + ATP + H2O = L-glutaminyl-tRNA(Gln) + L-glutamate + ADP + phosphate + H(+). It catalyses the reaction L-aspartyl-tRNA(Asn) + L-glutamine + ATP + H2O = L-asparaginyl-tRNA(Asn) + L-glutamate + ADP + phosphate + 2 H(+). In terms of biological role, allows the formation of correctly charged Asn-tRNA(Asn) or Gln-tRNA(Gln) through the transamidation of misacylated Asp-tRNA(Asn) or Glu-tRNA(Gln) in organisms which lack either or both of asparaginyl-tRNA or glutaminyl-tRNA synthetases. The reaction takes place in the presence of glutamine and ATP through an activated phospho-Asp-tRNA(Asn) or phospho-Glu-tRNA(Gln). This is Aspartyl/glutamyl-tRNA(Asn/Gln) amidotransferase subunit B from Azorhizobium caulinodans (strain ATCC 43989 / DSM 5975 / JCM 20966 / LMG 6465 / NBRC 14845 / NCIMB 13405 / ORS 571).